Reading from the N-terminus, the 199-residue chain is 7-methyl-GTP pyrophosphatase (199 aa).

The active-site Proton acceptor is the D73.

Belongs to the Maf family. YceF subfamily. It depends on a divalent metal cation as a cofactor.

The protein localises to the cytoplasm. It carries out the reaction N(7)-methyl-GTP + H2O = N(7)-methyl-GMP + diphosphate + H(+). In terms of biological role, nucleoside triphosphate pyrophosphatase that hydrolyzes 7-methyl-GTP (m(7)GTP). May have a dual role in cell division arrest and in preventing the incorporation of modified nucleotides into cellular nucleic acids. The polypeptide is 7-methyl-GTP pyrophosphatase (Bordetella pertussis (strain Tohama I / ATCC BAA-589 / NCTC 13251)).